A 291-amino-acid chain; its full sequence is Ribosomal RNA small subunit methyltransferase A (291 aa).

S-adenosyl-L-methionine-binding residues include His37, Leu39, Gly64, Glu85, Asp110, and Asn131.

It belongs to the class I-like SAM-binding methyltransferase superfamily. rRNA adenine N(6)-methyltransferase family. RsmA subfamily.

Its subcellular location is the cytoplasm. It catalyses the reaction adenosine(1518)/adenosine(1519) in 16S rRNA + 4 S-adenosyl-L-methionine = N(6)-dimethyladenosine(1518)/N(6)-dimethyladenosine(1519) in 16S rRNA + 4 S-adenosyl-L-homocysteine + 4 H(+). Functionally, specifically dimethylates two adjacent adenosines (A1518 and A1519) in the loop of a conserved hairpin near the 3'-end of 16S rRNA in the 30S particle. May play a critical role in biogenesis of 30S subunits. The sequence is that of Ribosomal RNA small subunit methyltransferase A from Dehalococcoides mccartyi (strain CBDB1).